We begin with the raw amino-acid sequence, 602 residues long: UvrABC system protein C (602 aa).

Residues 15–92 (DLPGSYQMKD…IQKYQPYYNI (78 aa)) enclose the GIY-YIG domain. One can recognise a UVR domain in the interval 197–232 (GKAKASLTAKMERAAKNLQFERAAEIRDQLHYIEQT).

This sequence belongs to the UvrC family. As to quaternary structure, interacts with UvrB in an incision complex.

The protein resides in the cytoplasm. In terms of biological role, the UvrABC repair system catalyzes the recognition and processing of DNA lesions. UvrC both incises the 5' and 3' sides of the lesion. The N-terminal half is responsible for the 3' incision and the C-terminal half is responsible for the 5' incision. This chain is UvrABC system protein C, found in Lacticaseibacillus casei (strain BL23) (Lactobacillus casei).